Consider the following 220-residue polypeptide: UPF0502 protein PSPPH_2577 (220 aa).

It belongs to the UPF0502 family.

The sequence is that of UPF0502 protein PSPPH_2577 from Pseudomonas savastanoi pv. phaseolicola (strain 1448A / Race 6) (Pseudomonas syringae pv. phaseolicola (strain 1448A / Race 6)).